The following is a 1155-amino-acid chain: Pesticidal crystal protein Cry1Ab (1155 aa).

The protein belongs to the delta endotoxin family.

In terms of biological role, promotes colloidosmotic lysis by binding to the midgut epithelial cells of many lepidopteran larvae. The chain is Pesticidal crystal protein Cry1Ab (cry1Ab) from Bacillus thuringiensis subsp. aizawai.